Consider the following 182-residue polypeptide: Large ribosomal subunit protein uL5c (182 aa).

This sequence belongs to the universal ribosomal protein uL5 family. Part of the 50S ribosomal subunit; contacts the 5S rRNA.

It localises to the plastid. The protein resides in the chloroplast. Binds 5S rRNA, forms part of the central protuberance of the 50S subunit. The polypeptide is Large ribosomal subunit protein uL5c (rpl5) (Emiliania huxleyi (Coccolithophore)).